We begin with the raw amino-acid sequence, 223 residues long: Neurotrophic factor BDNF precursor form (223 aa).

An N-terminal signal peptide occupies residues serine 1–alanine 5. Positions alanine 6–arginine 114 are excised as a propeptide. Asparagine 107 carries an N-linked (GlcNAc...) asparagine glycan. Disulfide bonds link cysteine 127–cysteine 194 and cysteine 172–cysteine 223.

Belongs to the NGF-beta family.

The protein localises to the secreted. Its function is as follows. Promotes the survival of neuronal populations that are all located either in the central nervous system or directly connected to it. The protein is Neurotrophic factor BDNF precursor form (BDNF) of Lichanura trivirgata (Rosy boa).